We begin with the raw amino-acid sequence, 697 residues long: Elongation factor G 2 (697 aa).

The tr-type G domain maps to Thr-6 to Thr-281. GTP contacts are provided by residues Ala-15–Thr-22, Asp-79–His-83, and Asn-133–Asp-136.

Belongs to the TRAFAC class translation factor GTPase superfamily. Classic translation factor GTPase family. EF-G/EF-2 subfamily.

It localises to the cytoplasm. Its function is as follows. Catalyzes the GTP-dependent ribosomal translocation step during translation elongation. During this step, the ribosome changes from the pre-translocational (PRE) to the post-translocational (POST) state as the newly formed A-site-bound peptidyl-tRNA and P-site-bound deacylated tRNA move to the P and E sites, respectively. Catalyzes the coordinated movement of the two tRNA molecules, the mRNA and conformational changes in the ribosome. In Trichodesmium erythraeum (strain IMS101), this protein is Elongation factor G 2.